The following is a 245-amino-acid chain: 1-(5-phosphoribosyl)-5-[(5-phosphoribosylamino)methylideneamino] imidazole-4-carboxamide isomerase (245 aa).

Aspartate 8 functions as the Proton acceptor in the catalytic mechanism. Aspartate 130 functions as the Proton donor in the catalytic mechanism.

Belongs to the HisA/HisF family.

It localises to the cytoplasm. It catalyses the reaction 1-(5-phospho-beta-D-ribosyl)-5-[(5-phospho-beta-D-ribosylamino)methylideneamino]imidazole-4-carboxamide = 5-[(5-phospho-1-deoxy-D-ribulos-1-ylimino)methylamino]-1-(5-phospho-beta-D-ribosyl)imidazole-4-carboxamide. The protein operates within amino-acid biosynthesis; L-histidine biosynthesis; L-histidine from 5-phospho-alpha-D-ribose 1-diphosphate: step 4/9. The polypeptide is 1-(5-phosphoribosyl)-5-[(5-phosphoribosylamino)methylideneamino] imidazole-4-carboxamide isomerase (Marinobacter nauticus (strain ATCC 700491 / DSM 11845 / VT8) (Marinobacter aquaeolei)).